Here is a 784-residue protein sequence, read N- to C-terminus: Transcription factor E4F1 (784 aa).

The tract at residues 41–85 (GFLGLPAPFSEEDEDDVHRCGRCQAEFTALEDFVQHKIQKACQRA) is required for ubiquitin ligase activity. S50 carries the post-translational modification Phosphoserine. A mediates dimerization, DNA-binding, transcription repression of CCNA2 and interaction with HMGA2 region spans residues 184 to 263 (LLVNKDGRYV…GKSFRESGAL (80 aa)). 2 consecutive C2H2-type zinc fingers follow at residues 192–214 (YVCA…MVTH) and 220–242 (HECK…HRRH). A C2H2-type 3; degenerate zinc finger spans residues 248–272 (YKCSKCGKSFRESGALTRHLKSLTP). Residues 369–566 (NLLHQAMQNS…REKGSLVRHV (198 aa)) form a mediates interaction with CDKN2A region. 5 consecutive C2H2-type zinc fingers follow at residues 435–457 (HPCP…KRGH), 463–485 (FACA…QEVH), 491–513 (FRCG…RRVH), 519–541 (YPCP…FRTH), and 547–569 (HVCQ…VRHH). Residues 435-599 (HPCPQCSETF…LNRHLRTKGG (165 aa)) form an interaction with BMI1 region. The tract at residues 521-580 (CPKCGKRYKTKNAQQVHFRTHLEEKPHVCQFCSRGFREKGSLVRHVRHHTGEKPFKCYKC) is mediates interaction with TP53. The segment at 575-597 (FKCYKCGRGFAEHGTLNRHLRTK) adopts a C2H2-type 9; degenerate zinc-finger fold. A mediates interaction with RASSF1 region spans residues 575-597 (FKCYKCGRGFAEHGTLNRHLRTK).

As to quaternary structure, homodimer; binds DNA as a dimer. Forms a complex with CDKN2A and TP53. Interactions with TP53, RB1, ANP32A, BMI1 and FHL2 regulate E4F1 activity. Interacts with HDAC1, HMGA2 and RASSF1. (Microbial infection) Interacts with HBV protein X. In terms of processing, proteolytic cleavage produces a 50 kDa N-terminal peptide (p50E4F) which has a DNA-binding activity and activates transcription in presence of the adenoviral E1A protein. The major full-length protein (p120E4F) functions as a repressor of transcription. Phosphorylated; p120E4F and p50E4F are both phosphorylated. Phosphorylation is cell cycle-dependent and differentially regulates DNA-binding activity and function of both forms. Post-translationally, may be sumoylated by UBE2I upon interaction with CDKN2A. Ubiquitously expressed.

Its subcellular location is the nucleus. It localises to the nucleoplasm. It is found in the cytoplasm. It catalyses the reaction S-ubiquitinyl-[E2 ubiquitin-conjugating enzyme]-L-cysteine + [acceptor protein]-L-lysine = [E2 ubiquitin-conjugating enzyme]-L-cysteine + N(6)-ubiquitinyl-[acceptor protein]-L-lysine.. Its pathway is protein modification; protein ubiquitination. In terms of biological role, may function as a transcriptional repressor. May also function as a ubiquitin ligase mediating ubiquitination of chromatin-associated TP53. Functions in cell survival and proliferation through control of the cell cycle. Functions in the p53 and pRB tumor suppressor pathways and regulates the cyclin CCNA2 transcription. Functionally, identified as a cellular target of the adenoviral oncoprotein E1A, it is required for both transcriptional activation and repression of viral genes. The sequence is that of Transcription factor E4F1 (E4F1) from Homo sapiens (Human).